Reading from the N-terminus, the 111-residue chain is Transcription initiation factor IIA subunit 2 (111 aa).

It belongs to the TFIIA subunit 2 family. As to quaternary structure, TFIIA is a heterodimer of the large unprocessed subunit 1 and a small subunit gamma. It was originally believed to be a heterotrimer of an alpha, a beta and a gamma subunit. Interacts with NCOA6 general coactivator. TFIIA forms a complex with TBP.

It localises to the nucleus. In terms of biological role, TFIIA is a component of the transcription machinery of RNA polymerase II and plays an important role in transcriptional activation. TFIIA in a complex with TBP mediates transcriptional activity. This is Transcription initiation factor IIA subunit 2 (gtf2a2) from Paralichthys olivaceus (Bastard halibut).